The following is a 259-amino-acid chain: HTH-type quorum sensing-dependent transcriptional regulator VjbR (259 aa).

The interval 76 to 179 (KNYFAIDPVF…AGIIHGTVCG (104 aa)) is C12-HSL binding. In terms of domain architecture, HTH luxR-type spans 183–248 (ANSVASLLTP…SAVATALSLG (66 aa)). A DNA-binding region (H-T-H motif) is located at residues 207-226 (DGEIAEILSIARWTVVTYLQ).

In terms of biological role, transcriptional regulator involved in the global control of Brucella gene expression. Mediates the effects of the quorum sensing autoinducer C12-HSL (N-dodecanoyl-homoserine lactone) on a large and diverse number of genes. The polypeptide is HTH-type quorum sensing-dependent transcriptional regulator VjbR (vjbR) (Brucella ovis (strain ATCC 25840 / 63/290 / NCTC 10512)).